Here is an 886-residue protein sequence, read N- to C-terminus: Cytosolic carboxypeptidase-like protein 5 (886 aa).

The Peptidase M14 domain occupies 157–570 (YPFSYSDCQD…AMAIAALDMA (414 aa)). His252 and Glu255 together coordinate Zn(2+). Positions 344-353 (AKSPTNQQPT) are enriched in polar residues. Disordered stretches follow at residues 344-363 (AKSPTNQQPTLHLPPEAPLS) and 374-401 (EAHLGQSPDGENPATWPETEPAEEKTDP). His434 contributes to the Zn(2+) binding site. The active-site Proton donor/acceptor is the Glu516. Disordered stretches follow at residues 602 to 737 (GLTS…RNMG) and 783 to 846 (TRLQ…PAFS). A compositionally biased stretch (polar residues) spans 621 to 635 (PKSNNSLPVSCSENA). The span at 643–654 (STGTSTGGSSSS) shows a compositional bias: low complexity. Positions 655-666 (QQNSPQMKNSPS) are enriched in polar residues. Positions 714-737 (STTSSLAPSPTLASSGPTSSRNMG) are enriched in low complexity. A compositionally biased stretch (polar residues) spans 805-815 (SSPTSPIPQTR). At Ser841 the chain carries Phosphoserine.

This sequence belongs to the peptidase M14 family. Zn(2+) serves as cofactor. As to expression, widely expressed. Highly expressed in testis, and moderately in pituitary, brain, eye and kidney.

It is found in the cytoplasm. The protein resides in the cytosol. The protein localises to the nucleus. Its subcellular location is the cytoskeleton. It localises to the spindle. It is found in the midbody. It carries out the reaction gamma-L-glutamyl-L-glutamyl-[protein] + H2O = L-glutamyl-[protein] + L-glutamate. The enzyme catalyses (L-glutamyl)(n+1)-gamma-L-glutamyl-L-glutamyl-[protein] + H2O = (L-glutamyl)(n)-gamma-L-glutamyl-L-glutamyl-[protein] + L-glutamate. The catalysed reaction is C-terminal L-alpha-aminoacyl-L-glutamyl-[tubulin] + H2O = C-terminal L-alpha-aminoacyl-[tubulin] + L-glutamate. It catalyses the reaction C-terminal L-alpha-aminoacyl-L-glutamyl-L-glutamyl-[tubulin] + H2O = C-terminal L-alpha-aminoacyl-L-glutamyl-[tubulin] + L-glutamate. In terms of biological role, metallocarboxypeptidase that mediates deglutamylation of tubulin and non-tubulin target proteins. Catalyzes the removal of polyglutamate side chains present on the gamma-carboxyl group of glutamate residues within the C-terminal tail of alpha- and beta-tubulin. Cleaves alpha- and gamma-linked polyglutamate tubulin side-chain, as well as the branching point glutamate. Also catalyzes the removal of alpha-linked glutamate residues from the carboxy-terminus of alpha-tubulin. Mediates deglutamylation of nucleotidyltransferase CGAS, leading to CGAS antiviral defense response activation. The chain is Cytosolic carboxypeptidase-like protein 5 from Mus musculus (Mouse).